The primary structure comprises 502 residues: 2,3-bisphosphoglycerate-independent phosphoglycerate mutase (502 aa).

Residues D13 and S63 each coordinate Mn(2+). S63 functions as the Phosphoserine intermediate in the catalytic mechanism. Substrate-binding positions include H117, 146–147, R177, R183, 251–254, and K324; these read RD and RSDR. The Mn(2+) site is built by D389, H393, D430, H431, and H448.

Belongs to the BPG-independent phosphoglycerate mutase family. Monomer. Mn(2+) is required as a cofactor.

The catalysed reaction is (2R)-2-phosphoglycerate = (2R)-3-phosphoglycerate. The protein operates within carbohydrate degradation; glycolysis; pyruvate from D-glyceraldehyde 3-phosphate: step 3/5. Its function is as follows. Catalyzes the interconversion of 2-phosphoglycerate and 3-phosphoglycerate. The chain is 2,3-bisphosphoglycerate-independent phosphoglycerate mutase from Ureaplasma urealyticum serovar 10 (strain ATCC 33699 / Western).